Reading from the N-terminus, the 80-residue chain is uncharacterized protein (80 aa).

This sequence belongs to the BolA/IbaG family.

This is an uncharacterized protein from Buchnera aphidicola subsp. Schizaphis graminum (strain Sg).